A 466-amino-acid polypeptide reads, in one-letter code: 3-isopropylmalate dehydratase large subunit (466 aa).

Positions 347, 407, and 410 each coordinate [4Fe-4S] cluster.

It belongs to the aconitase/IPM isomerase family. LeuC type 1 subfamily. As to quaternary structure, heterodimer of LeuC and LeuD. The cofactor is [4Fe-4S] cluster.

It catalyses the reaction (2R,3S)-3-isopropylmalate = (2S)-2-isopropylmalate. It functions in the pathway amino-acid biosynthesis; L-leucine biosynthesis; L-leucine from 3-methyl-2-oxobutanoate: step 2/4. In terms of biological role, catalyzes the isomerization between 2-isopropylmalate and 3-isopropylmalate, via the formation of 2-isopropylmaleate. This Acidiphilium cryptum (strain JF-5) protein is 3-isopropylmalate dehydratase large subunit.